The following is a 130-amino-acid chain: Glycine cleavage system H protein (130 aa).

The Lipoyl-binding domain maps to 24–106 (TATVGITDFA…YGDGWMFKVK (83 aa)). K65 bears the N6-lipoyllysine mark.

This sequence belongs to the GcvH family. The glycine cleavage system is composed of four proteins: P, T, L and H. The cofactor is (R)-lipoate.

The glycine cleavage system catalyzes the degradation of glycine. The H protein shuttles the methylamine group of glycine from the P protein to the T protein. In Marinobacter nauticus (strain ATCC 700491 / DSM 11845 / VT8) (Marinobacter aquaeolei), this protein is Glycine cleavage system H protein.